Reading from the N-terminus, the 37-residue chain is Cytochrome b6-f complex subunit 5 (37 aa).

The chain crosses the membrane as a helical span at residues 5–25 (LLSGIVLGMIPVTLAGLFVTA).

The protein belongs to the PetG family. In terms of assembly, the 4 large subunits of the cytochrome b6-f complex are cytochrome b6, subunit IV (17 kDa polypeptide, PetD), cytochrome f and the Rieske protein, while the 4 small subunits are PetG, PetL, PetM and PetN. The complex functions as a dimer.

It is found in the plastid. Its subcellular location is the chloroplast thylakoid membrane. Its function is as follows. Component of the cytochrome b6-f complex, which mediates electron transfer between photosystem II (PSII) and photosystem I (PSI), cyclic electron flow around PSI, and state transitions. PetG is required for either the stability or assembly of the cytochrome b6-f complex. In Staurastrum punctulatum (Green alga), this protein is Cytochrome b6-f complex subunit 5.